Consider the following 310-residue polypeptide: Aspartate carbamoyltransferase catalytic subunit 3 (310 aa).

Carbamoyl phosphate is bound by residues R55 and T56. K85 contributes to the L-aspartate binding site. R106, H134, and Q137 together coordinate carbamoyl phosphate. Residues R167 and R228 each coordinate L-aspartate. The carbamoyl phosphate site is built by L266 and P267.

The protein belongs to the aspartate/ornithine carbamoyltransferase superfamily. ATCase family. In terms of assembly, heterododecamer (2C3:3R2) of six catalytic PyrB chains organized as two trimers (C3), and six regulatory PyrI chains organized as three dimers (R2).

The catalysed reaction is carbamoyl phosphate + L-aspartate = N-carbamoyl-L-aspartate + phosphate + H(+). It functions in the pathway pyrimidine metabolism; UMP biosynthesis via de novo pathway; (S)-dihydroorotate from bicarbonate: step 2/3. Its function is as follows. Catalyzes the condensation of carbamoyl phosphate and aspartate to form carbamoyl aspartate and inorganic phosphate, the committed step in the de novo pyrimidine nucleotide biosynthesis pathway. The protein is Aspartate carbamoyltransferase catalytic subunit 3 of Shewanella halifaxensis (strain HAW-EB4).